Consider the following 249-residue polypeptide: 3-deoxy-manno-octulosonate cytidylyltransferase (249 aa).

Belongs to the KdsB family.

It localises to the cytoplasm. It catalyses the reaction 3-deoxy-alpha-D-manno-oct-2-ulosonate + CTP = CMP-3-deoxy-beta-D-manno-octulosonate + diphosphate. It functions in the pathway nucleotide-sugar biosynthesis; CMP-3-deoxy-D-manno-octulosonate biosynthesis; CMP-3-deoxy-D-manno-octulosonate from 3-deoxy-D-manno-octulosonate and CTP: step 1/1. It participates in bacterial outer membrane biogenesis; lipopolysaccharide biosynthesis. Its function is as follows. Activates KDO (a required 8-carbon sugar) for incorporation into bacterial lipopolysaccharide in Gram-negative bacteria. This Oleidesulfovibrio alaskensis (strain ATCC BAA-1058 / DSM 17464 / G20) (Desulfovibrio alaskensis) protein is 3-deoxy-manno-octulosonate cytidylyltransferase.